A 60-amino-acid chain; its full sequence is Large ribosomal subunit protein uL30 (60 aa).

It belongs to the universal ribosomal protein uL30 family. As to quaternary structure, part of the 50S ribosomal subunit.

This Leptothrix cholodnii (strain ATCC 51168 / LMG 8142 / SP-6) (Leptothrix discophora (strain SP-6)) protein is Large ribosomal subunit protein uL30.